The chain runs to 385 residues: Succinate--CoA ligase [ADP-forming] subunit beta (385 aa).

The ATP-grasp domain maps to 9–244; sequence KEVLRKYGVS…LDEEDPKEIE (236 aa). ATP contacts are provided by residues K46, 53–55, E99, C102, and E107; that span reads GRG. N199 and D213 together coordinate Mg(2+). The residue at position 220 (S220) is a Phosphoserine. Residues N264 and 321–323 each bind substrate; that span reads GIM.

It belongs to the succinate/malate CoA ligase beta subunit family. Heterotetramer of two alpha and two beta subunits. Interacts with BrxC. Mg(2+) is required as a cofactor.

It carries out the reaction succinate + ATP + CoA = succinyl-CoA + ADP + phosphate. The catalysed reaction is GTP + succinate + CoA = succinyl-CoA + GDP + phosphate. The protein operates within carbohydrate metabolism; tricarboxylic acid cycle; succinate from succinyl-CoA (ligase route): step 1/1. Functionally, succinyl-CoA synthetase functions in the citric acid cycle (TCA), coupling the hydrolysis of succinyl-CoA to the synthesis of either ATP or GTP and thus represents the only step of substrate-level phosphorylation in the TCA. The beta subunit provides nucleotide specificity of the enzyme and binds the substrate succinate, while the binding sites for coenzyme A and phosphate are found in the alpha subunit. The protein is Succinate--CoA ligase [ADP-forming] subunit beta of Bacillus subtilis (strain 168).